We begin with the raw amino-acid sequence, 1018 residues long: Importin-9 (1018 aa).

The region spanning 35-114 (TEKRIKQLEY…RNILPNGLYD (80 aa)) is the Importin N-terminal domain. The tract at residues 921–950 (GKSDEPLTDSEEDGDDEDAPGNPDKPRYIS) is disordered. The segment covering 926 to 939 (PLTDSEEDGDDEDA) has biased composition (acidic residues).

Belongs to the importin beta family.

It localises to the cytoplasm. The protein localises to the nucleus. Its function is as follows. Nuclear transport receptor that mediates nuclear import of proteins. Serves as receptor for nuclear localization signals (NLS) in cargo substrates. Is thought to mediate docking of the importin/substrate complex to the nuclear pore complex (NPC) through binding to nucleoporin and the complex is subsequently translocated through the pore by an energy requiring, Ran-dependent mechanism. Mediates the import of pre-assembled proteasomes into the nucleus during the late stages of sperm development. This Drosophila melanogaster (Fruit fly) protein is Importin-9.